A 473-amino-acid polypeptide reads, in one-letter code: ATP synthase subunit beta 2 (473 aa).

158–165 provides a ligand contact to ATP; that stretch reads GGAGVGKT.

The protein belongs to the ATPase alpha/beta chains family. In terms of assembly, F-type ATPases have 2 components, CF(1) - the catalytic core - and CF(0) - the membrane proton channel. CF(1) has five subunits: alpha(3), beta(3), gamma(1), delta(1), epsilon(1). CF(0) has three main subunits: a(1), b(2) and c(9-12). The alpha and beta chains form an alternating ring which encloses part of the gamma chain. CF(1) is attached to CF(0) by a central stalk formed by the gamma and epsilon chains, while a peripheral stalk is formed by the delta and b chains.

The protein resides in the cell membrane. The enzyme catalyses ATP + H2O + 4 H(+)(in) = ADP + phosphate + 5 H(+)(out). In terms of biological role, produces ATP from ADP in the presence of a proton gradient across the membrane. The catalytic sites are hosted primarily by the beta subunits. The chain is ATP synthase subunit beta 2 from Listeria welshimeri serovar 6b (strain ATCC 35897 / DSM 20650 / CCUG 15529 / CIP 8149 / NCTC 11857 / SLCC 5334 / V8).